Here is a 152-residue protein sequence, read N- to C-terminus: Arginine repressor (152 aa).

It belongs to the ArgR family.

The protein resides in the cytoplasm. Its pathway is amino-acid biosynthesis; L-arginine biosynthesis [regulation]. Its function is as follows. Regulates arginine biosynthesis genes. In Lactococcus lactis subsp. cremoris (strain MG1363), this protein is Arginine repressor.